The primary structure comprises 287 residues: Shikimate dehydrogenase (NADP(+)) (287 aa).

Residues 20–22 (SRS) and T67 contribute to the shikimate site. Catalysis depends on K71, which acts as the Proton acceptor. E84 provides a ligand contact to NADP(+). Positions 93 and 108 each coordinate shikimate. Residues 132–136 (GAGGA) and M226 contribute to the NADP(+) site. Y228 lines the shikimate pocket. An NADP(+)-binding site is contributed by G250.

This sequence belongs to the shikimate dehydrogenase family. As to quaternary structure, homodimer.

The catalysed reaction is shikimate + NADP(+) = 3-dehydroshikimate + NADPH + H(+). It functions in the pathway metabolic intermediate biosynthesis; chorismate biosynthesis; chorismate from D-erythrose 4-phosphate and phosphoenolpyruvate: step 4/7. Functionally, involved in the biosynthesis of the chorismate, which leads to the biosynthesis of aromatic amino acids. Catalyzes the reversible NADPH linked reduction of 3-dehydroshikimate (DHSA) to yield shikimate (SA). The chain is Shikimate dehydrogenase (NADP(+)) from Bordetella petrii (strain ATCC BAA-461 / DSM 12804 / CCUG 43448).